A 301-amino-acid polypeptide reads, in one-letter code: UDP-N-acetylenolpyruvoylglucosamine reductase (301 aa).

The region spanning Arg-24–Gly-190 is the FAD-binding PCMH-type domain. The active site involves Arg-169. Residue Ser-220 is the Proton donor of the active site. Residue Glu-290 is part of the active site.

The protein belongs to the MurB family. FAD is required as a cofactor.

The protein localises to the cytoplasm. It carries out the reaction UDP-N-acetyl-alpha-D-muramate + NADP(+) = UDP-N-acetyl-3-O-(1-carboxyvinyl)-alpha-D-glucosamine + NADPH + H(+). It functions in the pathway cell wall biogenesis; peptidoglycan biosynthesis. Functionally, cell wall formation. In Synechococcus sp. (strain ATCC 27144 / PCC 6301 / SAUG 1402/1) (Anacystis nidulans), this protein is UDP-N-acetylenolpyruvoylglucosamine reductase.